Reading from the N-terminus, the 106-residue chain is ATP-dependent Clp protease adapter protein ClpS (106 aa).

This sequence belongs to the ClpS family. Binds to the N-terminal domain of the chaperone ClpA.

Functionally, involved in the modulation of the specificity of the ClpAP-mediated ATP-dependent protein degradation. This Edwardsiella ictaluri (strain 93-146) protein is ATP-dependent Clp protease adapter protein ClpS.